Reading from the N-terminus, the 233-residue chain is 4'-phosphopantetheinyl transferase psf-1 (233 aa).

3 residues coordinate Mg(2+): D110, E112, and E154. Positions 161 to 192 (GKGISYGLSSFTARLSEDGQATLRLPDHEAPC) are peptidyl carrier protein binding.

The protein belongs to the P-Pant transferase superfamily. Gsp/Sfp/HetI/AcpT family. It depends on Mg(2+) as a cofactor.

The enzyme catalyses apo-[peptidyl-carrier protein] + CoA = holo-[peptidyl-carrier protein] + adenosine 3',5'-bisphosphate + H(+). Its function is as follows. Probably activates the peptidyl carrier protein (PCP) domains of surfactin synthetase by transferring the 4'-phosphopantetheinyl moiety of coenzyme A (CoA) to a serine residue. Required for the production of the lipopeptide antibiotic, surfactin. The chain is 4'-phosphopantetheinyl transferase psf-1 (psf-1) from Bacillus pumilus (Bacillus mesentericus).